A 102-amino-acid polypeptide reads, in one-letter code: COX assembly mitochondrial protein 2 homolog (102 aa).

The region spanning 11–55 is the CHCH domain; the sequence is TKECNMLIEFLQRCHSEKPIGKMIGKCSYWDEAVWQCTKKERIWR. 2 consecutive short sequence motifs (cx9C motif) follow at residues 14 to 24 and 37 to 47; these read CNMLIEFLQRC and CSYWDEAVWQC. Intrachain disulfides connect Cys-14/Cys-47 and Cys-24/Cys-37.

This sequence belongs to the CMC family.

It localises to the mitochondrion. Functionally, may be involved in cytochrome c oxidase biogenesis. The sequence is that of COX assembly mitochondrial protein 2 homolog from Caenorhabditis elegans.